The chain runs to 293 residues: tRNA pseudouridine synthase B (293 aa).

Asp39 serves as the catalytic Nucleophile.

This sequence belongs to the pseudouridine synthase TruB family. Type 1 subfamily.

The enzyme catalyses uridine(55) in tRNA = pseudouridine(55) in tRNA. Responsible for synthesis of pseudouridine from uracil-55 in the psi GC loop of transfer RNAs. This Streptococcus mutans serotype c (strain ATCC 700610 / UA159) protein is tRNA pseudouridine synthase B.